The chain runs to 244 residues: Putative lipoprotein LprA (244 aa).

Positions 1-24 are cleaved as a signal peptide; sequence MKHPPCSVVAAATAILAVVLAIGG. Cysteine 25 carries the N-palmitoyl cysteine lipid modification. Cysteine 25 carries the S-diacylglycerol cysteine lipid modification.

It belongs to the LppX/LprAFG lipoprotein family.

The protein resides in the cell membrane. In Mycobacterium bovis (strain ATCC BAA-935 / AF2122/97), this protein is Putative lipoprotein LprA (lprA).